The following is a 738-amino-acid chain: Translation initiation factor IF-2 (738 aa).

The span at 1 to 10 (MNSMRISGHQ) shows a compositional bias: polar residues. A disordered region spans residues 1–150 (MNSMRISGHQ…PTTVRAPVRP (150 aa)). Positions 22–102 (AGGGRGPGNP…GGRGPSGGRG (81 aa)) are enriched in gly residues. Basic and acidic residues predominate over residues 103 to 120 (GDGRRREESPTDHEDGRI). The span at 121–143 (NRSGRSTSTTTTRTSSTLARPTT) shows a compositional bias: low complexity. A tr-type G domain is found at 238 to 405 (PRPPVVTIMG…MILLVADLNE (168 aa)). The G1 stretch occupies residues 247–254 (GHVDHGKT). 247-254 (GHVDHGKT) contributes to the GTP binding site. The tract at residues 272 to 276 (GITQH) is G2. The segment at 293-296 (DTPG) is G3. GTP-binding positions include 293–297 (DTPGH) and 347–350 (NKID). A G4 region spans residues 347–350 (NKID). Residues 383–385 (SAK) are G5.

The protein belongs to the TRAFAC class translation factor GTPase superfamily. Classic translation factor GTPase family. IF-2 subfamily.

The protein resides in the cytoplasm. In terms of biological role, one of the essential components for the initiation of protein synthesis. Protects formylmethionyl-tRNA from spontaneous hydrolysis and promotes its binding to the 30S ribosomal subunits. Also involved in the hydrolysis of GTP during the formation of the 70S ribosomal complex. In Roseiflexus castenholzii (strain DSM 13941 / HLO8), this protein is Translation initiation factor IF-2.